We begin with the raw amino-acid sequence, 426 residues long: D-tagatose-1,6-bisphosphate aldolase subunit KbaZ (426 aa).

Belongs to the GatZ/KbaZ family. KbaZ subfamily. Forms a complex with KbaY.

Its pathway is carbohydrate metabolism; D-tagatose 6-phosphate degradation; D-glyceraldehyde 3-phosphate and glycerone phosphate from D-tagatose 6-phosphate: step 2/2. In terms of biological role, component of the tagatose-1,6-bisphosphate aldolase KbaYZ that is required for full activity and stability of the Y subunit. Could have a chaperone-like function for the proper and stable folding of KbaY. When expressed alone, KbaZ does not show any aldolase activity. The chain is D-tagatose-1,6-bisphosphate aldolase subunit KbaZ from Escherichia coli O7:K1 (strain IAI39 / ExPEC).